Reading from the N-terminus, the 253-residue chain is 5'-nucleotidase SurE (253 aa).

Positions 8, 9, 39, and 92 each coordinate a divalent metal cation.

The protein belongs to the SurE nucleotidase family. Requires a divalent metal cation as cofactor.

The protein localises to the cytoplasm. The enzyme catalyses a ribonucleoside 5'-phosphate + H2O = a ribonucleoside + phosphate. In terms of biological role, nucleotidase that shows phosphatase activity on nucleoside 5'-monophosphates. The sequence is that of 5'-nucleotidase SurE from Burkholderia pseudomallei (strain 668).